The following is a 299-amino-acid chain: GDNF family receptor alpha-4 (299 aa).

The N-terminal stretch at 1-20 is a signal peptide; it reads MVRCLGPALLLLLLLGSASS. Residues 145–198 form a disordered region; sequence RGLSPAHRPPAAQASPPGLSGLVHPSAQRPRRLPAGPGRPLPARLRGPRGVPAG. Positions 177-198 are enriched in low complexity; it reads LPAGPGRPLPARLRGPRGVPAG. N208 carries N-linked (GlcNAc...) asparagine glycosylation. Residue G278 is the site of GPI-anchor amidated glycine attachment. Residues 279-299 constitute a propeptide, removed in mature form; the sequence is RALERRSLLSILPVLALPALL.

It belongs to the GDNFR family. As to quaternary structure, interacts with ARTN ligand and RET: forms a 2:2:2 ternary complex composed of ARTN ligand, GFRA3 and RET receptor. Interacts with SORL1. In terms of tissue distribution, predominantly expressed in the adult thyroid gland. Low levels also found in fetal adrenal and thyroid glands.

The protein localises to the cell membrane. Its subcellular location is the secreted. Its function is as follows. Receptor for persephin (PSPN), a growth factor that exhibits neurotrophic activity on mesencephalic dopaminergic and motor neurons. Acts by binding to its coreceptor, GFRA4, leading to autophosphorylation and activation of the RET receptor. May be important in C-cell development and, in the postnatal development of the adrenal medulla. This chain is GDNF family receptor alpha-4 (GFRA4), found in Homo sapiens (Human).